The chain runs to 590 residues: Putative laccase-19 (590 aa).

Positions 1-28 (MEKLSMVTSLLCAITVAVLAVAVVSGEA) are cleaved as a signal peptide. Plastocyanin-like domains are found at residues 36 to 152 (VVHE…PRDG) and 161 to 315 (KDVP…YAGA). Residues Asn41 and Asn47 are each glycosylated (N-linked (GlcNAc...) asparagine). The Cu cation site is built by His86 and His88. Asn120 carries N-linked (GlcNAc...) asparagine glycosylation. Cu cation is bound by residues His131 and His133. Residues Asn205, Asn344, Asn378, Asn397, Asn434, and Asn465 are each glycosylated (N-linked (GlcNAc...) asparagine). In terms of domain architecture, Plastocyanin-like 3 spans 424–566 (DFPIRPPRPF…ATAFIVEDGP (143 aa)). Cu cation-binding residues include Asn483, His486, His488, His545, Cys546, His547, His551, and Met556. Residues 565 to 590 (GPTPETSLPPPPPEFKRCGNNGLSQP) form a disordered region.

This sequence belongs to the multicopper oxidase family. The cofactor is Cu cation.

It is found in the secreted. Its subcellular location is the extracellular space. The protein localises to the apoplast. The catalysed reaction is 4 hydroquinone + O2 = 4 benzosemiquinone + 2 H2O. Its function is as follows. Lignin degradation and detoxification of lignin-derived products. In Oryza sativa subsp. indica (Rice), this protein is Putative laccase-19 (LAC19).